The sequence spans 296 residues: 5'-3' exonuclease (296 aa).

Residues 175–262 (VMPKALIDIK…VPLACTLKDA (88 aa)) form the 5'-3' exonuclease domain.

5'-3' exonuclease acting preferentially on double-stranded DNA. The protein is 5'-3' exonuclease (ypcP) of Bacillus subtilis (strain 168).